Consider the following 120-residue polypeptide: MNRLMLRAKLHRATVTEADLHYEGSCGIDAALLEAADMREFEQIELYNVNNGERFSTYVIPAPPGSGVISLNGAAARKAHVGDLLIICTYAPMNDAEVATHKPKVVLLGPGNRIESVRKF.

The active-site Schiff-base intermediate with substrate; via pyruvic acid is the serine 25. At serine 25 the chain carries Pyruvic acid (Ser). Threonine 57 is a binding site for substrate. Tyrosine 58 (proton donor) is an active-site residue. Substrate is bound at residue 73 to 75; that stretch reads GAA.

Belongs to the PanD family. As to quaternary structure, heterooctamer of four alpha and four beta subunits. It depends on pyruvate as a cofactor. Is synthesized initially as an inactive proenzyme, which is activated by self-cleavage at a specific serine bond to produce a beta-subunit with a hydroxyl group at its C-terminus and an alpha-subunit with a pyruvoyl group at its N-terminus.

Its subcellular location is the cytoplasm. The catalysed reaction is L-aspartate + H(+) = beta-alanine + CO2. Its pathway is cofactor biosynthesis; (R)-pantothenate biosynthesis; beta-alanine from L-aspartate: step 1/1. Catalyzes the pyruvoyl-dependent decarboxylation of aspartate to produce beta-alanine. This Methylibium petroleiphilum (strain ATCC BAA-1232 / LMG 22953 / PM1) protein is Aspartate 1-decarboxylase.